Reading from the N-terminus, the 164-residue chain is UPF0305 protein MJ0646 (164 aa).

The protein belongs to the UPF0305 family.

The sequence is that of UPF0305 protein MJ0646 from Methanocaldococcus jannaschii (strain ATCC 43067 / DSM 2661 / JAL-1 / JCM 10045 / NBRC 100440) (Methanococcus jannaschii).